Consider the following 729-residue polypeptide: Neurochondrin (729 aa).

Serine 2 is subject to N-acetylserine. At serine 2 the chain carries Phosphoserine. Residues cysteine 3 and cysteine 4 are each lipidated (S-palmitoyl cysteine). Residue arginine 75 is modified to Asymmetric dimethylarginine. Serine 448 bears the Phosphoserine mark.

The protein belongs to the neurochondrin family. In terms of assembly, interacts with MCHR1. Interacts with SEMA4C. Interacts with DIAPH1 (via FH3 domain). Interacts with GRM5. Post-translationally, palmitoylated. Palmitoylation by ZDHHC1, ZDHHC3 and ZDHHC11 regulates the association of NCDN with endosome membranes. May also be palmitoylated by ZDHHC7. As to expression, expressed in brain and in peripheral nervous system (at protein level). Weakly expressed in neurites.

It is found in the cytoplasm. The protein resides in the cytosol. It localises to the endosome membrane. Its subcellular location is the cell projection. The protein localises to the dendrite. It is found in the postsynapse. Probably involved in signal transduction, in the nervous system, via increasing cell surface localization of GRM5 and positively regulating its signaling. Required for the spatial learning process. Acts as a negative regulator of Ca(2+)-calmodulin-dependent protein kinase 2 (CaMK2) phosphorylation. May play a role in modulating melanin-concentrating hormone-mediated functions via its interaction with MCHR1 that interferes with G protein-coupled signal transduction. May be involved in bone metabolism. May also be involved in neurite outgrowth. The chain is Neurochondrin (Ncdn) from Rattus norvegicus (Rat).